A 215-amino-acid chain; its full sequence is Pyrrolidone-carboxylate peptidase 1 (215 aa).

Residues glutamate 80, cysteine 143, and histidine 167 contribute to the active site.

This sequence belongs to the peptidase C15 family. Homotetramer.

Its subcellular location is the cytoplasm. It carries out the reaction Release of an N-terminal pyroglutamyl group from a polypeptide, the second amino acid generally not being Pro.. In terms of biological role, removes 5-oxoproline from various penultimate amino acid residues except L-proline. This Ralstonia nicotianae (strain ATCC BAA-1114 / GMI1000) (Ralstonia solanacearum) protein is Pyrrolidone-carboxylate peptidase 1.